The sequence spans 355 residues: Uroporphyrinogen decarboxylase (355 aa).

Residues 23 to 27, D72, Y148, S203, and H321 contribute to the substrate site; that span reads RQAGR.

Belongs to the uroporphyrinogen decarboxylase family. In terms of assembly, homodimer.

It is found in the cytoplasm. The enzyme catalyses uroporphyrinogen III + 4 H(+) = coproporphyrinogen III + 4 CO2. The protein operates within porphyrin-containing compound metabolism; protoporphyrin-IX biosynthesis; coproporphyrinogen-III from 5-aminolevulinate: step 4/4. Catalyzes the decarboxylation of four acetate groups of uroporphyrinogen-III to yield coproporphyrinogen-III. In Chloroflexus aurantiacus (strain ATCC 29366 / DSM 635 / J-10-fl), this protein is Uroporphyrinogen decarboxylase.